The primary structure comprises 435 residues: GTPase Der (435 aa).

EngA-type G domains follow at residues 4–167 (PIVA…SPDA) and 175–350 (ISFS…ENKN). Residues 10 to 17 (GQPNVGKS), 57 to 61 (DTGGI), 119 to 122 (NKAD), 181 to 188 (GRPNVGKS), 228 to 232 (DTAGI), and 293 to 296 (NKWD) contribute to the GTP site. One can recognise a KH-like domain in the interval 351-435 (QRIQSSVLND…PIKILPRKRK (85 aa)).

This sequence belongs to the TRAFAC class TrmE-Era-EngA-EngB-Septin-like GTPase superfamily. EngA (Der) GTPase family. In terms of assembly, associates with the 50S ribosomal subunit.

Its function is as follows. GTPase that plays an essential role in the late steps of ribosome biogenesis. The polypeptide is GTPase Der (Lactobacillus delbrueckii subsp. bulgaricus (strain ATCC 11842 / DSM 20081 / BCRC 10696 / JCM 1002 / NBRC 13953 / NCIMB 11778 / NCTC 12712 / WDCM 00102 / Lb 14)).